Reading from the N-terminus, the 351-residue chain is Uroporphyrinogen decarboxylase (351 aa).

Substrate is bound by residues 25–29, D74, Y151, S206, and H325; that span reads RQAGR.

Belongs to the uroporphyrinogen decarboxylase family. In terms of assembly, homodimer.

The protein resides in the cytoplasm. The catalysed reaction is uroporphyrinogen III + 4 H(+) = coproporphyrinogen III + 4 CO2. It participates in porphyrin-containing compound metabolism; protoporphyrin-IX biosynthesis; coproporphyrinogen-III from 5-aminolevulinate: step 4/4. Its function is as follows. Catalyzes the decarboxylation of four acetate groups of uroporphyrinogen-III to yield coproporphyrinogen-III. The polypeptide is Uroporphyrinogen decarboxylase (Chlorobium chlorochromatii (strain CaD3)).